A 114-amino-acid chain; its full sequence is Superoxide dismutase [Cu-Zn] (114 aa).

Cu cation contacts are provided by His37, His39, and His54. A disordered region spans residues 48 to 68 (CMSSGPHFNPRNKEHGAPTDE). Residues His54, His62, His71, and Asp74 each coordinate Zn(2+). Over residues 58 to 68 (RNKEHGAPTDE) the composition is skewed to basic and acidic residues. Position 111 (His111) interacts with Cu cation.

The protein belongs to the Cu-Zn superoxide dismutase family. Homodimer. Cu cation serves as cofactor. Zn(2+) is required as a cofactor.

The protein localises to the cytoplasm. It carries out the reaction 2 superoxide + 2 H(+) = H2O2 + O2. Its function is as follows. Destroys radicals which are normally produced within the cells and which are toxic to biological systems. This chain is Superoxide dismutase [Cu-Zn], found in Drosophila miranda (Fruit fly).